The sequence spans 120 residues: Adult-specific rigid cuticular protein 11.9 (120 aa).

A Chitin-binding type R&amp;R domain is found at G9 to P87.

In terms of biological role, component of the rigid cuticle of the spider. This chain is Adult-specific rigid cuticular protein 11.9, found in Araneus diadematus (European garden spider).